The primary structure comprises 87 residues: uncharacterized protein (87 aa).

A disordered region spans residues 67-87; it reads TGGDPREAVVRPADQVEGYTG.

This is an uncharacterized protein from Mycobacterium bovis (strain ATCC BAA-935 / AF2122/97).